The following is a 438-amino-acid chain: Protein SPMIP7 (438 aa).

Testis-specific.

Essential for normal spermatogenesis. The chain is Protein SPMIP7 from Homo sapiens (Human).